The sequence spans 584 residues: Beta-fructofuranosidase, insoluble isoenzyme CWINV1 (584 aa).

The first 28 residues, 1–28 (MTKEVCSNIGLWLLLTLLIGNYVVNLEA), serve as a signal peptide directing secretion. Substrate is bound by residues 63 to 66 (WMND), glutamine 82, tryptophan 90, and 125 to 126 (WS). The active site involves aspartate 66. 2 N-linked (GlcNAc...) asparagine glycosylation sites follow: asparagine 159 and asparagine 186. Residues 191–192 (RD), glutamate 246, and aspartate 282 each bind substrate. N-linked (GlcNAc...) asparagine glycans are attached at residues asparagine 342 and asparagine 446. Cysteines 442 and 491 form a disulfide.

Belongs to the glycosyl hydrolase 32 family. In terms of tissue distribution, expressed in seedlings, leaves, flowers, and seeds.

Its subcellular location is the secreted. The protein resides in the extracellular space. The protein localises to the apoplast. It is found in the cell wall. The catalysed reaction is Hydrolysis of terminal non-reducing beta-D-fructofuranoside residues in beta-D-fructofuranosides.. Its function is as follows. Beta-fructofuranosidase that can use sucrose and 1-kestose, and, to a lower extent, neokestose and levan, as substrates, but not inuline. The protein is Beta-fructofuranosidase, insoluble isoenzyme CWINV1 (CWINV1) of Arabidopsis thaliana (Mouse-ear cress).